The sequence spans 249 residues: DNA repair protein RecO (249 aa).

It belongs to the RecO family.

In terms of biological role, involved in DNA repair and RecF pathway recombination. The protein is DNA repair protein RecO of Lactobacillus delbrueckii subsp. bulgaricus (strain ATCC 11842 / DSM 20081 / BCRC 10696 / JCM 1002 / NBRC 13953 / NCIMB 11778 / NCTC 12712 / WDCM 00102 / Lb 14).